Here is a 276-residue protein sequence, read N- to C-terminus: Light-independent protochlorophyllide reductase iron-sulfur ATP-binding protein (276 aa).

ATP is bound by residues 12-17 and Lys-41; that span reads GIGKST. Ser-16 provides a ligand contact to Mg(2+). [4Fe-4S] cluster-binding residues include Cys-97 and Cys-131. An ATP-binding site is contributed by 182–183; sequence NR.

It belongs to the NifH/BchL/ChlL family. Homodimer. Protochlorophyllide reductase is composed of three subunits; BchL, BchN and BchB. Requires [4Fe-4S] cluster as cofactor.

It catalyses the reaction chlorophyllide a + oxidized 2[4Fe-4S]-[ferredoxin] + 2 ADP + 2 phosphate = protochlorophyllide a + reduced 2[4Fe-4S]-[ferredoxin] + 2 ATP + 2 H2O. The protein operates within porphyrin-containing compound metabolism; bacteriochlorophyll biosynthesis (light-independent). Functionally, component of the dark-operative protochlorophyllide reductase (DPOR) that uses Mg-ATP and reduced ferredoxin to reduce ring D of protochlorophyllide (Pchlide) to form chlorophyllide a (Chlide). This reaction is light-independent. The L component serves as a unique electron donor to the NB-component of the complex, and binds Mg-ATP. This chain is Light-independent protochlorophyllide reductase iron-sulfur ATP-binding protein, found in Chlorobium luteolum (strain DSM 273 / BCRC 81028 / 2530) (Pelodictyon luteolum).